Here is a 435-residue protein sequence, read N- to C-terminus: Keratin, type I cytoskeletal 18 (435 aa).

The segment at 2-84 (SYRPGSYSVS…SVSGSGLVGN (83 aa)) is head. The interval 85-120 (EKETMIGLNDRLAAYLETVRNLEQANSKLEFQIREA) is coil 1A. In terms of domain architecture, IF rod spans 85–396 (EKETMIGLND…RLLDGEDFRL (312 aa)). The linker 1 stretch occupies residues 121 to 137 (LEKKGPTTRDLSPFEKT). Positions 138 to 229 (LEDLRKKVYD…QNHNQEVNDL (92 aa)) are coil 1B. The segment at 230–253 (RNQIAQSGVQVDVDAPKGQDLAQV) is linker 12. The segment at 254-391 (LAEVRAQYES…IATYRRLLDG (138 aa)) is coil 2. A tail region spans residues 392 to 435 (EDFRLQDALVDQSSTKSIKKVTVTQTLVDGKVVSESTNTKEIGK).

This sequence belongs to the intermediate filament family. Heterotetramer of two type I and two type II keratins. Keratin-18 associates with keratin-8. In terms of processing, phosphorylated. Post-translationally, proteolytically cleaved by caspases during epithelial cell apoptosis.

In terms of biological role, when phosphorylated, plays a role in filament reorganization. The chain is Keratin, type I cytoskeletal 18 from Acipenser baerii (Siberian sturgeon).